Here is a 215-residue protein sequence, read N- to C-terminus: MKRFFGVSNNQPAPTLDEATKRIGGRMGQMDEKINGLNQELLAYDKQIKATRPGPAQNAIKQKAIRVLQQKKMYERQRDQMASTSFNMEQTKFATESMRDTITTVSAMKQGAKDMKTQLKHIKIEDVDDMQDEMQDLLDYNNEIQESLGRAYQTPDTLDESELEAELMSMGEELELEASMPSYLMTPSVPTTDPHQSSVDEYGLPIGQEASQQVV.

The stretch at 29–81 (QMDEKINGLNQELLAYDKQIKATRPGPAQNAIKQKAIRVLQQKKMYERQRDQM) forms a coiled coil. A disordered region spans residues 186-215 (TPSVPTTDPHQSSVDEYGLPIGQEASQQVV). Polar residues predominate over residues 188–199 (SVPTTDPHQSSV).

The protein belongs to the SNF7 family. Probable peripherally associated component of the endosomal sorting required for transport complex III (ESCRT-III).

Its subcellular location is the endosome membrane. Its function is as follows. Probable peripherally associated component of the endosomal sorting required for transport complex III (ESCRT-III) which is involved in multivesicular bodies (MVBs) formation and sorting of endosomal cargo proteins into MVBs. MVBs contain intraluminal vesicles (ILVs) that are generated by invagination and scission from the limiting membrane of the endosome and are delivered to lysosomes enabling degradation of membrane proteins. The polypeptide is Charged multivesicular body protein 5 (chmp5) (Dictyostelium discoideum (Social amoeba)).